A 171-amino-acid polypeptide reads, in one-letter code: Adenine phosphoribosyltransferase (171 aa).

It belongs to the purine/pyrimidine phosphoribosyltransferase family. Homodimer.

Its subcellular location is the cytoplasm. It catalyses the reaction AMP + diphosphate = 5-phospho-alpha-D-ribose 1-diphosphate + adenine. It functions in the pathway purine metabolism; AMP biosynthesis via salvage pathway; AMP from adenine: step 1/1. In terms of biological role, catalyzes a salvage reaction resulting in the formation of AMP, that is energically less costly than de novo synthesis. This chain is Adenine phosphoribosyltransferase (apt), found in Prochlorococcus marinus subsp. pastoris (strain CCMP1986 / NIES-2087 / MED4).